The chain runs to 302 residues: Putative S-adenosyl-L-methionine-dependent methyltransferase MAV_2803 (302 aa).

S-adenosyl-L-methionine is bound by residues Asp129 and 158–159 (DL).

The protein belongs to the UPF0677 family.

Functionally, exhibits S-adenosyl-L-methionine-dependent methyltransferase activity. This is Putative S-adenosyl-L-methionine-dependent methyltransferase MAV_2803 from Mycobacterium avium (strain 104).